The chain runs to 202 residues: N-(5'-phosphoribosyl)anthranilate isomerase (202 aa).

The protein belongs to the TrpF family.

The catalysed reaction is N-(5-phospho-beta-D-ribosyl)anthranilate = 1-(2-carboxyphenylamino)-1-deoxy-D-ribulose 5-phosphate. It functions in the pathway amino-acid biosynthesis; L-tryptophan biosynthesis; L-tryptophan from chorismate: step 3/5. This is N-(5'-phosphoribosyl)anthranilate isomerase from Listeria monocytogenes serotype 4b (strain F2365).